The following is a 677-amino-acid chain: Methionine--tRNA ligase (677 aa).

The short motif at 15-25 (PYANGSIHLGH) is the 'HIGH' region element. C146, C149, C159, and C162 together coordinate Zn(2+). The 'KMSKS' region signature appears at 333-337 (KMSKS). K336 contributes to the ATP binding site. Residues 575-677 (DFAKIDLRVA…DGAKPGQQVK (103 aa)) enclose the tRNA-binding domain.

The protein belongs to the class-I aminoacyl-tRNA synthetase family. MetG type 1 subfamily. Homodimer. The cofactor is Zn(2+).

The protein localises to the cytoplasm. It carries out the reaction tRNA(Met) + L-methionine + ATP = L-methionyl-tRNA(Met) + AMP + diphosphate. Its function is as follows. Is required not only for elongation of protein synthesis but also for the initiation of all mRNA translation through initiator tRNA(fMet) aminoacylation. In Salmonella agona (strain SL483), this protein is Methionine--tRNA ligase.